Here is a 204-residue protein sequence, read N- to C-terminus: Cell wall protein RHD3 (204 aa).

Positions 1–15 (MKFLAILSLSSSALA) are cleaved as a signal peptide. A lipid anchor (GPI-anchor amidated glycine) is attached at Gly-182. A propeptide spans 183 to 204 (AAGQNKLSYGVGMAAVVAGLVM) (removed in mature form).

Belongs to the SRP1/TIP1 family. Post-translationally, the GPI-anchor is attached to the protein in the endoplasmic reticulum and serves to target the protein to the cell surface. There, the glucosamine-inositol phospholipid moiety is cleaved off and the GPI-modified mannoprotein is covalently attached via its lipidless GPI glycan remnant to the 1,6-beta-glucan of the outer cell wall layer. O-glycosylated by PMT1.

It localises to the secreted. It is found in the cell wall. The protein localises to the membrane. Its function is as follows. Component of the cell wall involved in virulence. Does not seem to have a major role in maintaining cell wall integrity but plays a role in the relationship between C.albicans and the host. The sequence is that of Cell wall protein RHD3 (RHD3) from Candida albicans (strain SC5314 / ATCC MYA-2876) (Yeast).